The chain runs to 140 residues: Glycine cleavage system H protein (140 aa).

The Lipoyl-binding domain occupies 22–104; the sequence is EVVIGITRFA…YGKGWMLRLK (83 aa). K63 carries the post-translational modification N6-lipoyllysine.

Belongs to the GcvH family. As to quaternary structure, the glycine cleavage system is composed of four proteins: P, T, L and H. The cofactor is (R)-lipoate.

In terms of biological role, the glycine cleavage system catalyzes the degradation of glycine. The H protein shuttles the methylamine group of glycine from the P protein to the T protein. The chain is Glycine cleavage system H protein from Magnetococcus marinus (strain ATCC BAA-1437 / JCM 17883 / MC-1).